The following is a 422-amino-acid chain: Alcohol dehydrogenase 4 (422 aa).

Residues 1 to 29 (MSILRSPFRLIRSPARFFPSLFHSSCNQS) constitute a mitochondrion transit peptide. The NAD(+) site is built by Asp-82, Asn-114, Gly-141, Ser-142, Thr-181, Thr-182, Thr-190, Phe-192, Lys-203, and Gly-225. Positions 237, 241, and 306 each coordinate Fe(2+). Residues His-310 and His-320 each coordinate NAD(+). His-320 serves as a coordination point for Fe(2+).

This sequence belongs to the iron-containing alcohol dehydrogenase family. Zn(2+) serves as cofactor.

Its subcellular location is the mitochondrion matrix. It catalyses the reaction a primary alcohol + NAD(+) = an aldehyde + NADH + H(+). The catalysed reaction is a secondary alcohol + NAD(+) = a ketone + NADH + H(+). The enzyme catalyses ethanol + NAD(+) = acetaldehyde + NADH + H(+). In terms of biological role, involved in ethanol oxidation in mitochondria. This chain is Alcohol dehydrogenase 4 (adh4), found in Schizosaccharomyces pombe (strain 972 / ATCC 24843) (Fission yeast).